The sequence spans 576 residues: Arginine--tRNA ligase (576 aa).

The 'HIGH' region motif lies at 126 to 136 (ANPTGPMHIGH).

It belongs to the class-I aminoacyl-tRNA synthetase family. In terms of assembly, monomer.

It is found in the cytoplasm. It carries out the reaction tRNA(Arg) + L-arginine + ATP = L-arginyl-tRNA(Arg) + AMP + diphosphate. The polypeptide is Arginine--tRNA ligase (Rickettsia africae (strain ESF-5)).